We begin with the raw amino-acid sequence, 200 residues long: dTTP/UTP pyrophosphatase (200 aa).

Catalysis depends on Asp-72, which acts as the Proton acceptor.

The protein belongs to the Maf family. YhdE subfamily. It depends on a divalent metal cation as a cofactor.

It localises to the cytoplasm. It carries out the reaction dTTP + H2O = dTMP + diphosphate + H(+). The enzyme catalyses UTP + H2O = UMP + diphosphate + H(+). Nucleoside triphosphate pyrophosphatase that hydrolyzes dTTP and UTP. May have a dual role in cell division arrest and in preventing the incorporation of modified nucleotides into cellular nucleic acids. This Pseudomonas savastanoi pv. phaseolicola (strain 1448A / Race 6) (Pseudomonas syringae pv. phaseolicola (strain 1448A / Race 6)) protein is dTTP/UTP pyrophosphatase.